Here is a 911-residue protein sequence, read N- to C-terminus: Protein translocase subunit SecA (911 aa).

Residues Gln87, 105–109, and Asp512 contribute to the ATP site; that span reads GEGKT. Residues 865-892 are disordered; that stretch reads AAEQDGAEEGAVATATAPVRSENKVGRN. Residues 873 to 883 are compositionally biased toward low complexity; that stretch reads EGAVATATAPV. Zn(2+)-binding residues include Cys895, Cys897, Cys906, and His907.

This sequence belongs to the SecA family. In terms of assembly, monomer and homodimer. Part of the essential Sec protein translocation apparatus which comprises SecA, SecYEG and auxiliary proteins SecDF-YajC and YidC. It depends on Zn(2+) as a cofactor.

It localises to the cell inner membrane. It is found in the cytoplasm. It carries out the reaction ATP + H2O + cellular proteinSide 1 = ADP + phosphate + cellular proteinSide 2.. Its function is as follows. Part of the Sec protein translocase complex. Interacts with the SecYEG preprotein conducting channel. Has a central role in coupling the hydrolysis of ATP to the transfer of proteins into and across the cell membrane, serving both as a receptor for the preprotein-SecB complex and as an ATP-driven molecular motor driving the stepwise translocation of polypeptide chains across the membrane. This chain is Protein translocase subunit SecA, found in Ectopseudomonas mendocina (strain ymp) (Pseudomonas mendocina).